Here is a 520-residue protein sequence, read N- to C-terminus: Cobyric acid synthase (520 aa).

One can recognise a GATase cobBQ-type domain in the interval 254–465; it reads ELDIAVVRLP…IHGILDNDGL (212 aa). Catalysis depends on Cys335, which acts as the Nucleophile. His457 is an active-site residue.

Belongs to the CobB/CobQ family. CobQ subfamily.

It participates in cofactor biosynthesis; adenosylcobalamin biosynthesis. Catalyzes amidations at positions B, D, E, and G on adenosylcobyrinic A,C-diamide. NH(2) groups are provided by glutamine, and one molecule of ATP is hydrogenolyzed for each amidation. This chain is Cobyric acid synthase, found in Sorangium cellulosum (strain So ce56) (Polyangium cellulosum (strain So ce56)).